A 163-amino-acid chain; its full sequence is Large ribosomal subunit protein bL21 (163 aa).

The disordered stretch occupies residues Lys124–Asp163.

It belongs to the bacterial ribosomal protein bL21 family. In terms of assembly, part of the 50S ribosomal subunit. Contacts protein L20.

Functionally, this protein binds to 23S rRNA in the presence of protein L20. This Bartonella quintana (strain Toulouse) (Rochalimaea quintana) protein is Large ribosomal subunit protein bL21.